The chain runs to 456 residues: Probable glycine dehydrogenase (decarboxylating) subunit 1 (456 aa).

This sequence belongs to the GcvP family. N-terminal subunit subfamily. As to quaternary structure, the glycine cleavage system is composed of four proteins: P, T, L and H. In this organism, the P 'protein' is a heterodimer of two subunits.

It carries out the reaction N(6)-[(R)-lipoyl]-L-lysyl-[glycine-cleavage complex H protein] + glycine + H(+) = N(6)-[(R)-S(8)-aminomethyldihydrolipoyl]-L-lysyl-[glycine-cleavage complex H protein] + CO2. The glycine cleavage system catalyzes the degradation of glycine. The P protein binds the alpha-amino group of glycine through its pyridoxal phosphate cofactor; CO(2) is released and the remaining methylamine moiety is then transferred to the lipoamide cofactor of the H protein. In Legionella pneumophila (strain Lens), this protein is Probable glycine dehydrogenase (decarboxylating) subunit 1.